Consider the following 235-residue polypeptide: tRNA (guanine-N(1)-)-methyltransferase (235 aa).

Residues Gly113 and 133–138 (IGDYIL) each bind S-adenosyl-L-methionine.

It belongs to the RNA methyltransferase TrmD family. Homodimer.

The protein resides in the cytoplasm. The catalysed reaction is guanosine(37) in tRNA + S-adenosyl-L-methionine = N(1)-methylguanosine(37) in tRNA + S-adenosyl-L-homocysteine + H(+). Specifically methylates guanosine-37 in various tRNAs. The polypeptide is tRNA (guanine-N(1)-)-methyltransferase (Wolbachia sp. subsp. Brugia malayi (strain TRS)).